The primary structure comprises 259 residues: MLKRILITNDDGFDSPGLLALKEALCDVAHLTVVAPANEKSACGHGLTLTSPLRFIKLDDDVYKLRDGTPTDCIYLALNALYEEHSKPDLIISGINLGSNMGEDITYSGTASGAMEGVIHGIPSVAFSQLLHDKNTFGFDFALAKKVVRELTLKILSGGFPLGDRKFLNVNIPYVGIEEFKGYKVTEMGYRLYGNDAHLHRNPRGEEHYWLGLHPLAWNERNNARESDFKVATEGYVSITPIKLDLTSYEDIKELEAWI.

4 residues coordinate a divalent metal cation: aspartate 10, aspartate 11, serine 41, and asparagine 96.

It belongs to the SurE nucleotidase family. Requires a divalent metal cation as cofactor.

It is found in the cytoplasm. The enzyme catalyses a ribonucleoside 5'-phosphate + H2O = a ribonucleoside + phosphate. Functionally, nucleotidase that shows phosphatase activity on nucleoside 5'-monophosphates. The polypeptide is 5'-nucleotidase SurE (Wolinella succinogenes (strain ATCC 29543 / DSM 1740 / CCUG 13145 / JCM 31913 / LMG 7466 / NCTC 11488 / FDC 602W) (Vibrio succinogenes)).